A 137-amino-acid polypeptide reads, in one-letter code: Nucleoside diphosphate kinase (137 aa).

K11, F59, R87, T93, R104, and N114 together coordinate ATP. H117 (pros-phosphohistidine intermediate) is an active-site residue.

Belongs to the NDK family. Homotetramer. Requires Mg(2+) as cofactor.

Its subcellular location is the cytoplasm. It carries out the reaction a 2'-deoxyribonucleoside 5'-diphosphate + ATP = a 2'-deoxyribonucleoside 5'-triphosphate + ADP. The catalysed reaction is a ribonucleoside 5'-diphosphate + ATP = a ribonucleoside 5'-triphosphate + ADP. In terms of biological role, major role in the synthesis of nucleoside triphosphates other than ATP. The ATP gamma phosphate is transferred to the NDP beta phosphate via a ping-pong mechanism, using a phosphorylated active-site intermediate. This Frankia alni (strain DSM 45986 / CECT 9034 / ACN14a) protein is Nucleoside diphosphate kinase.